The sequence spans 756 residues: Catalase-peroxidase (756 aa).

Positions 91–244 (WHSAGTYRTG…LAAVQMGLIY (154 aa)) form a cross-link, tryptophyl-tyrosyl-methioninium (Trp-Tyr) (with M-270). The active-site Proton acceptor is the histidine 92. The segment at 198 to 230 (AQKKMQQPGDGTLVAEPENHANEESRTASGERN) is disordered. Basic and acidic residues predominate over residues 214–223 (PENHANEESR). The segment at residues 244-270 (YVNPEGPEGVPDPVASAKDIRETFGRM) is a cross-link (tryptophyl-tyrosyl-methioninium (Tyr-Met) (with W-91)). Histidine 285 serves as a coordination point for heme b. Positions 371-390 (KNGAGAGKIPDAHDPSKRHA) are disordered.

This sequence belongs to the peroxidase family. Peroxidase/catalase subfamily. As to quaternary structure, homodimer or homotetramer. It depends on heme b as a cofactor. Post-translationally, formation of the three residue Trp-Tyr-Met cross-link is important for the catalase, but not the peroxidase activity of the enzyme.

The enzyme catalyses H2O2 + AH2 = A + 2 H2O. It carries out the reaction 2 H2O2 = O2 + 2 H2O. Its function is as follows. Bifunctional enzyme with both catalase and broad-spectrum peroxidase activity. The polypeptide is Catalase-peroxidase (Pseudomonas savastanoi pv. phaseolicola (strain 1448A / Race 6) (Pseudomonas syringae pv. phaseolicola (strain 1448A / Race 6))).